A 123-amino-acid polypeptide reads, in one-letter code: Fluoride-specific ion channel FluC (123 aa).

Transmembrane regions (helical) follow at residues 7–27 (LLLI…SGIL), 39–59 (LVNS…FFGF), 67–87 (IFLG…SYET), and 100–120 (FMNV…GFIL). G75 and S78 together coordinate Na(+).

The protein belongs to the fluoride channel Fluc/FEX (TC 1.A.43) family.

The protein resides in the cell membrane. It carries out the reaction fluoride(in) = fluoride(out). Na(+) is not transported, but it plays an essential structural role and its presence is essential for fluoride channel function. Fluoride-specific ion channel. Important for reducing fluoride concentration in the cell, thus reducing its toxicity. This is Fluoride-specific ion channel FluC from Pyrococcus abyssi (strain GE5 / Orsay).